The primary structure comprises 871 residues: DNA mismatch repair protein MutS (871 aa).

617 to 624 (GPNMGGKS) lines the ATP pocket.

This sequence belongs to the DNA mismatch repair MutS family.

This protein is involved in the repair of mismatches in DNA. It is possible that it carries out the mismatch recognition step. This protein has a weak ATPase activity. This chain is DNA mismatch repair protein MutS, found in Hydrogenovibrio crunogenus (strain DSM 25203 / XCL-2) (Thiomicrospira crunogena).